The primary structure comprises 179 residues: Large ribosomal subunit protein uL5 (179 aa).

It belongs to the universal ribosomal protein uL5 family. Part of the 50S ribosomal subunit; part of the 5S rRNA/L5/L18/L25 subcomplex. Contacts the 5S rRNA and the P site tRNA. Forms a bridge to the 30S subunit in the 70S ribosome.

Its function is as follows. This is one of the proteins that bind and probably mediate the attachment of the 5S RNA into the large ribosomal subunit, where it forms part of the central protuberance. In the 70S ribosome it contacts protein S13 of the 30S subunit (bridge B1b), connecting the 2 subunits; this bridge is implicated in subunit movement. Contacts the P site tRNA; the 5S rRNA and some of its associated proteins might help stabilize positioning of ribosome-bound tRNAs. The protein is Large ribosomal subunit protein uL5 of Geobacillus thermodenitrificans (strain NG80-2).